Consider the following 602-residue polypeptide: Threonine--tRNA ligase (602 aa).

The segment at 208–499 is catalytic; the sequence is DHRKLGIELK…LTEHCAGEFP (292 aa). Zn(2+) contacts are provided by cysteine 300, histidine 351, and histidine 476.

This sequence belongs to the class-II aminoacyl-tRNA synthetase family. As to quaternary structure, homodimer. It depends on Zn(2+) as a cofactor.

It localises to the cytoplasm. It catalyses the reaction tRNA(Thr) + L-threonine + ATP = L-threonyl-tRNA(Thr) + AMP + diphosphate + H(+). Functionally, catalyzes the attachment of threonine to tRNA(Thr) in a two-step reaction: L-threonine is first activated by ATP to form Thr-AMP and then transferred to the acceptor end of tRNA(Thr). Also edits incorrectly charged L-seryl-tRNA(Thr). This Campylobacter jejuni subsp. doylei (strain ATCC BAA-1458 / RM4099 / 269.97) protein is Threonine--tRNA ligase.